Reading from the N-terminus, the 235-residue chain is Adenosine 5'-phosphosulfate reductase (235 aa).

The [4Fe-4S] cluster site is built by Cys-121, Cys-122, Cys-204, and Cys-207. Cys-230 serves as the catalytic Nucleophile; cysteine thiosulfonate intermediate.

The protein belongs to the PAPS reductase family. CysH subfamily. It depends on [4Fe-4S] cluster as a cofactor.

Its subcellular location is the cytoplasm. It carries out the reaction [thioredoxin]-disulfide + sulfite + AMP + 2 H(+) = adenosine 5'-phosphosulfate + [thioredoxin]-dithiol. The protein operates within sulfur metabolism; hydrogen sulfide biosynthesis; sulfite from sulfate. In terms of biological role, catalyzes the formation of sulfite from adenosine 5'-phosphosulfate (APS) using thioredoxin as an electron donor. The chain is Adenosine 5'-phosphosulfate reductase from Anoxybacillus flavithermus (strain DSM 21510 / WK1).